Reading from the N-terminus, the 582-residue chain is Aspartate--tRNA ligase (582 aa).

L-aspartate is bound at residue Glu-174. Residues 198-201 (QITK) are aspartate. Arg-220 serves as a coordination point for L-aspartate. ATP is bound by residues 220–222 (RDE) and Gln-229. Residue His-443 participates in L-aspartate binding. Glu-477 lines the ATP pocket. Arg-484 contributes to the L-aspartate binding site. Residue 529-532 (GLDR) participates in ATP binding.

Belongs to the class-II aminoacyl-tRNA synthetase family. Type 1 subfamily. In terms of assembly, homodimer.

The protein resides in the cytoplasm. The enzyme catalyses tRNA(Asp) + L-aspartate + ATP = L-aspartyl-tRNA(Asp) + AMP + diphosphate. In terms of biological role, catalyzes the attachment of L-aspartate to tRNA(Asp) in a two-step reaction: L-aspartate is first activated by ATP to form Asp-AMP and then transferred to the acceptor end of tRNA(Asp). The sequence is that of Aspartate--tRNA ligase from Streptococcus pyogenes serotype M5 (strain Manfredo).